Consider the following 240-residue polypeptide: ATP synthase subunit a (240 aa).

The next 5 helical transmembrane spans lie at 21–41 (LSNL…CVWG), 78–98 (IFLP…LIGV), 116–136 (DAVM…YYGI), 183–203 (ILLS…FGAA), and 212–232 (FSVF…MVYM).

Belongs to the ATPase A chain family. In terms of assembly, F-type ATPases have 2 components, CF(1) - the catalytic core - and CF(0) - the membrane proton channel. CF(1) has five subunits: alpha(3), beta(3), gamma(1), delta(1), epsilon(1). CF(0) has three main subunits: a(1), b(2) and c(9-12). The alpha and beta chains form an alternating ring which encloses part of the gamma chain. CF(1) is attached to CF(0) by a central stalk formed by the gamma and epsilon chains, while a peripheral stalk is formed by the delta and b chains.

It is found in the cell membrane. In terms of biological role, key component of the proton channel; it plays a direct role in the translocation of protons across the membrane. The polypeptide is ATP synthase subunit a (Oceanobacillus iheyensis (strain DSM 14371 / CIP 107618 / JCM 11309 / KCTC 3954 / HTE831)).